Reading from the N-terminus, the 225-residue chain is Suppressor of cytokine signaling 3 (225 aa).

Residues 22–33 (LKTFSSKSEYQL) are kinase inhibitory region (KIR). The interval 34-45 (VVNAVRKLQESG) is extended SH2 subdomain (ESS). Positions 46–142 (FYWSAVTGGE…APSFSLPPTE (97 aa)) constitute an SH2 domain. The interval 141–160 (TEPSFEVQEQPPAQALPGGT) is disordered. Residues 177–224 (VLSRPLSSNVATLQHLCRKTVNGHLDSYEKVTQLPGPIREFLDQYDAP) form the SOCS box domain.

In terms of assembly, interacts with multiple activated proteins of the tyrosine kinase signaling pathway including IGF1 receptor, insulin receptor and JAK2. Binding to JAK2 is mediated through the KIR and SH2 domains to a phosphorylated tyrosine residue within the JAK2 JH1 domain. Binds specific activated tyrosine residues of the leptin, EPO, IL12, GSCF and gp130 receptors. Interaction with CSNK1E stabilize SOCS3 protein. Component of the probable ECS(SOCS3) E3 ubiquitin-protein ligase complex which contains CUL5, RNF7/RBX2, Elongin BC complex and SOCS3. Interacts with CUL5, RNF7, ELOB and ELOC. Interacts with FGFR3. Interacts with INSR. Interacts with BCL10; this interaction may interfere with BCL10-binding with PELI2. Interacts with NOD2 (via CARD domain); the interaction promotes NOD2 degradation. In terms of processing, phosphorylated on tyrosine residues after stimulation by the cytokines, IL-2, EPO or IGF1.

The protein operates within protein modification; protein ubiquitination. Its function is as follows. SOCS family proteins form part of a classical negative feedback system that regulates cytokine signal transduction. SOCS3 is involved in negative regulation of cytokines that signal through the JAK/STAT pathway. Inhibits cytokine signal transduction by binding to tyrosine kinase receptors including IL6ST/gp130, LIF, erythropoietin, insulin, IL12, GCSF and leptin receptors. Binding to JAK2 inhibits its kinase activity and regulates IL6 signaling. Suppresses fetal liver erythropoiesis. Regulates onset and maintenance of allergic responses mediated by T-helper type 2 cells. Probable substrate recognition component of a SCF-like ECS (Elongin BC-CUL2/5-SOCS-box protein) E3 ubiquitin-protein ligase complex which mediates the ubiquitination and subsequent proteasomal degradation of target proteins. This chain is Suppressor of cytokine signaling 3, found in Rattus norvegicus (Rat).